A 258-amino-acid polypeptide reads, in one-letter code: MPKTLTEKLNAIKAAGKGIFVPYIMAGDHEKGLDGLAETIHFLEDLGVSAIEVGIPFSDPVADGPVIEEAGLRSLAHGTSTQALVETLKTIETEIPLVIMTYFNPLFQYGVENFVKDLADTAVKGLIIPDLPHEHANFVEPFLADTDIALIPLVSLTTGIERQKELIEGAEGFVYAVAINGVTGKSGNYRADLDKHLAQLHQVADIPVLTGFGVSSQADLERFNAVSDGVIVGSKIVKALHQGEPIQDFIRQAVAYQK.

Catalysis depends on proton acceptor residues Glu-52 and Asp-63.

This sequence belongs to the TrpA family. As to quaternary structure, tetramer of two alpha and two beta chains.

The catalysed reaction is (1S,2R)-1-C-(indol-3-yl)glycerol 3-phosphate + L-serine = D-glyceraldehyde 3-phosphate + L-tryptophan + H2O. It participates in amino-acid biosynthesis; L-tryptophan biosynthesis; L-tryptophan from chorismate: step 5/5. In terms of biological role, the alpha subunit is responsible for the aldol cleavage of indoleglycerol phosphate to indole and glyceraldehyde 3-phosphate. In Streptococcus pneumoniae (strain P1031), this protein is Tryptophan synthase alpha chain.